The primary structure comprises 199 residues: Recombination protein RecR (199 aa).

Residues 57–72 (CEICGNLDTKSICHIC) form a C4-type zinc finger. One can recognise a Toprim domain in the interval 80-175 (STIAIVETVA…KISRLASGIP (96 aa)).

It belongs to the RecR family.

In terms of biological role, may play a role in DNA repair. It seems to be involved in an RecBC-independent recombinational process of DNA repair. It may act with RecF and RecO. In Rickettsia prowazekii (strain Madrid E), this protein is Recombination protein RecR.